The chain runs to 348 residues: Dihydroorotase (348 aa).

Histidine 13 and histidine 15 together coordinate Zn(2+). Substrate is bound by residues 15 to 17 (HLR) and asparagine 41. 3 residues coordinate Zn(2+): lysine 99, histidine 136, and histidine 174. Lysine 99 is modified (N6-carboxylysine). Residue histidine 136 coordinates substrate. Leucine 219 is a substrate binding site. Aspartate 247 contributes to the Zn(2+) binding site. The active site involves aspartate 247. 2 residues coordinate substrate: histidine 251 and alanine 263.

Belongs to the metallo-dependent hydrolases superfamily. DHOase family. Class II DHOase subfamily. As to quaternary structure, homodimer. It depends on Zn(2+) as a cofactor.

It carries out the reaction (S)-dihydroorotate + H2O = N-carbamoyl-L-aspartate + H(+). It participates in pyrimidine metabolism; UMP biosynthesis via de novo pathway; (S)-dihydroorotate from bicarbonate: step 3/3. Functionally, catalyzes the reversible cyclization of carbamoyl aspartate to dihydroorotate. The protein is Dihydroorotase of Rhizobium johnstonii (strain DSM 114642 / LMG 32736 / 3841) (Rhizobium leguminosarum bv. viciae).